We begin with the raw amino-acid sequence, 235 residues long: MIPWLSPYSLEFPDVRLALDEPNGLLALGGDLSPERLVSAYQRGIFPWFNPGDPILWWSPHPRTVVFPHQHHVSRSLRKTLRKGIYRVTFDHCFAQVMRACAAPRAYANGTWISEQMISSYTRLHEQGYAHSVEVWQDENLVGGLYGLSLGKIFFGESMFSRADNASKTGFAYLVRQLQQWDFRLIDCQVASDHLFTLGAVEISRDEFQKMLVHFTEQPRDYPLHWHEIDPETRW.

This sequence belongs to the L/F-transferase family.

It localises to the cytoplasm. The catalysed reaction is N-terminal L-lysyl-[protein] + L-leucyl-tRNA(Leu) = N-terminal L-leucyl-L-lysyl-[protein] + tRNA(Leu) + H(+). It carries out the reaction N-terminal L-arginyl-[protein] + L-leucyl-tRNA(Leu) = N-terminal L-leucyl-L-arginyl-[protein] + tRNA(Leu) + H(+). The enzyme catalyses L-phenylalanyl-tRNA(Phe) + an N-terminal L-alpha-aminoacyl-[protein] = an N-terminal L-phenylalanyl-L-alpha-aminoacyl-[protein] + tRNA(Phe). Functions in the N-end rule pathway of protein degradation where it conjugates Leu, Phe and, less efficiently, Met from aminoacyl-tRNAs to the N-termini of proteins containing an N-terminal arginine or lysine. The protein is Leucyl/phenylalanyl-tRNA--protein transferase of Cellvibrio japonicus (strain Ueda107) (Pseudomonas fluorescens subsp. cellulosa).